The chain runs to 94 residues: Integration host factor subunit beta (94 aa).

The protein belongs to the bacterial histone-like protein family. In terms of assembly, heterodimer of an alpha and a beta chain.

This protein is one of the two subunits of integration host factor, a specific DNA-binding protein that functions in genetic recombination as well as in transcriptional and translational control. The sequence is that of Integration host factor subunit beta from Roseobacter denitrificans (strain ATCC 33942 / OCh 114) (Erythrobacter sp. (strain OCh 114)).